The chain runs to 485 residues: Inosine-5'-monophosphate dehydrogenase (485 aa).

CBS domains follow at residues isoleucine 99–glutamate 154 and methionine 156–glutamate 215. Residues aspartate 247 and glycine 294–glycine 296 contribute to the NAD(+) site. 2 residues coordinate K(+): glycine 296 and glycine 298. An IMP-binding site is contributed by serine 299. Cysteine 301 provides a ligand contact to K(+). The active-site Thioimidate intermediate is the cysteine 301. IMP contacts are provided by residues aspartate 334–glycine 336, glycine 357–asparagine 358, and tyrosine 381–glycine 385. Arginine 397 acts as the Proton acceptor in catalysis. Glutamate 412 provides a ligand contact to IMP. Residues glutamate 466, serine 467, and histidine 468 each coordinate K(+).

It belongs to the IMPDH/GMPR family. In terms of assembly, homotetramer. It depends on K(+) as a cofactor.

The enzyme catalyses IMP + NAD(+) + H2O = XMP + NADH + H(+). Its pathway is purine metabolism; XMP biosynthesis via de novo pathway; XMP from IMP: step 1/1. Mycophenolic acid (MPA) is a non-competitive inhibitor that prevents formation of the closed enzyme conformation by binding to the same site as the amobile flap. In contrast, mizoribine monophosphate (MZP) is a competitive inhibitor that induces the closed conformation. MPA is a potent inhibitor of mammalian IMPDHs but a poor inhibitor of the bacterial enzymes. MZP is a more potent inhibitor of bacterial IMPDH. In terms of biological role, catalyzes the conversion of inosine 5'-phosphate (IMP) to xanthosine 5'-phosphate (XMP), the first committed and rate-limiting step in the de novo synthesis of guanine nucleotides, and therefore plays an important role in the regulation of cell growth. The chain is Inosine-5'-monophosphate dehydrogenase from Pyrococcus abyssi (strain GE5 / Orsay).